The primary structure comprises 336 residues: tRNA N6-adenosine threonylcarbamoyltransferase (336 aa).

The Fe cation site is built by H112 and H116. Residues 136–140, D169, G182, and N276 contribute to the substrate site; that span reads LVSGG. D304 contacts Fe cation.

It belongs to the KAE1 / TsaD family. The cofactor is Fe(2+).

The protein resides in the cytoplasm. It carries out the reaction L-threonylcarbamoyladenylate + adenosine(37) in tRNA = N(6)-L-threonylcarbamoyladenosine(37) in tRNA + AMP + H(+). In terms of biological role, required for the formation of a threonylcarbamoyl group on adenosine at position 37 (t(6)A37) in tRNAs that read codons beginning with adenine. Is involved in the transfer of the threonylcarbamoyl moiety of threonylcarbamoyl-AMP (TC-AMP) to the N6 group of A37, together with TsaE and TsaB. TsaD likely plays a direct catalytic role in this reaction. This is tRNA N6-adenosine threonylcarbamoyltransferase from Francisella tularensis subsp. holarctica (strain FTNF002-00 / FTA).